Here is a 607-residue protein sequence, read N- to C-terminus: MILLAFSSGRRLDFVHRSGVFFLQTLLWILCATVCGTEQYFNVEVWLQKYGYLPPTDPRMSVLRSAETMQSALAAMQQFYGINMTGKVDRNTIDWMKKPRCGVPDQTRGSSKFNIRRKRYALTGQKWQHKHITYSIKNVTPKVGDPETRRAIRRAFDVWQNVTPLTFEEVPYSELENGKRDVDITIIFASGFHGDSSPFDGEGGFLAHAYFPGPGIGGDTHFDSDEPWTLGNPNHDGNDLFLVAVHELGHALGLEHSNDPTAIMAPFYQYMETDNFKLPNDDLQGIQKIYGPPDKIPPPTRPLPTVPPHRSVPPADPRRHDRPKPPRPPTGRPSYPGAKPNICDGNFNTLAILRREMFVFKDQWFWRVRNNRVMDGYPMQITYFWRGLPPSIDAVYENSDGNFVFFKGNKYWVFKDTTLQPGYPHDLITLGNGIPPHGIDSAIWWEDVGKTYFFKGDRYWRYSEEMKTMDPGYPKPITIWKGIPESPQGAFVHKENGFTYFYKGKEYWKFNNQILKVEPGYPRSILKDFMGCDGPTDRDKEGLSPPDDVDIVIKLDNTASTVKAIAIVIPCILALCLLVLVYTVFQFKRKGTPRHILYCKRSMQEWV.

The N-terminal stretch at 1 to 31 (MILLAFSSGRRLDFVHRSGVFFLQTLLWILC) is a signal peptide. A propeptide spanning residues 32–119 (ATVCGTEQYF…SSKFNIRRKR (88 aa)) is cleaved from the precursor. N-linked (GlcNAc...) asparagine glycosylation occurs at Asn83. The short motif at 99–106 (PRCGVPDQ) is the Cysteine switch element. Cys101 contributes to the Zn(2+) binding site. Topologically, residues 120–564 (YALTGQKWQH…LDNTASTVKA (445 aa)) are extracellular. Asp183 lines the Ca(2+) pocket. 2 residues coordinate Zn(2+): His193 and Asp195. 4 residues coordinate Ca(2+): Asp200, Gly201, Gly203, and Phe205. His208 is a Zn(2+) binding site. Ca(2+)-binding residues include Gly215, Gly217, and Asp219. A Zn(2+)-binding site is contributed by His221. 2 residues coordinate Ca(2+): Asp223 and Glu226. His246 lines the Zn(2+) pocket. Residue Glu247 is part of the active site. Residues His250 and His256 each contribute to the Zn(2+) site. Positions 281 to 340 (DDLQGIQKIYGPPDKIPPPTRPLPTVPPHRSVPPADPRRHDRPKPPRPPTGRPSYPGAKP) are disordered. Pro residues predominate over residues 294–315 (DKIPPPTRPLPTVPPHRSVPPA). 4 Hemopexin repeats span residues 340-388 (PNIC…WRGL), 389-434 (PPSI…GNGI), 436-484 (PHGI…KGIP), and 485-532 (ESPQ…FMGC). Cys343 and Cys532 are disulfide-bonded. Residues 565–585 (IAIVIPCILALCLLVLVYTVF) form a helical membrane-spanning segment. The Cytoplasmic portion of the chain corresponds to 586–607 (QFKRKGTPRHILYCKRSMQEWV).

Belongs to the peptidase M10A family. Interacts with CSPG4 through CSPG4 chondroitin sulfate glycosaminoglycan. It depends on Zn(2+) as a cofactor. Ca(2+) serves as cofactor. The precursor is cleaved by a furin endopeptidase.

It localises to the cell membrane. In terms of biological role, endopeptidase that degrades various components of the extracellular matrix, such as collagen type III and fibronectin. Activates progelatinase A. Involved in the matrix remodeling of blood vessels. It has no effect on type I, II, IV and V collagen. However, upon interaction with CSPG4, it may be involved in degradation and invasion of type I collagen by melanoma cells. The protein is Matrix metalloproteinase-16 (Mmp16) of Mus musculus (Mouse).